A 459-amino-acid chain; its full sequence is Cysteine--tRNA ligase (459 aa).

Cys31 contacts Zn(2+). A 'HIGH' region motif is present at residues 33–43 (PTVYYNPHIGN). Zn(2+) contacts are provided by Cys216, His241, and Glu245. The 'KMSKS' region motif lies at 274–278 (KMSKS). Lys277 lines the ATP pocket.

This sequence belongs to the class-I aminoacyl-tRNA synthetase family. As to quaternary structure, monomer. Zn(2+) serves as cofactor.

The protein resides in the cytoplasm. It catalyses the reaction tRNA(Cys) + L-cysteine + ATP = L-cysteinyl-tRNA(Cys) + AMP + diphosphate. The sequence is that of Cysteine--tRNA ligase from Rickettsia rickettsii (strain Iowa).